We begin with the raw amino-acid sequence, 223 residues long: Putative synaptogyrin-2 like protein (223 aa).

M1 carries the post-translational modification N-acetylmethionine. S3 bears the Phosphoserine mark. One can recognise an MARVEL domain in the interval 20-170 (FLTQPQVVAR…LASLTYQRYK (151 aa)). The next 4 membrane-spanning stretches (helical) occupy residues 26–46 (VVAR…IYGE), 71–91 (GSAI…DAYF), 104–124 (VIGD…GFCF), and 146–166 (AAIT…SLTY). The segment at 197–223 (ASVDNYQQPPFTQNAETTEGYQPPPVY) is disordered. The segment covering 200-216 (DNYQQPPFTQNAETTEG) has biased composition (polar residues).

It belongs to the synaptogyrin family.

The protein resides in the membrane. This chain is Putative synaptogyrin-2 like protein, found in Homo sapiens (Human).